Here is a 258-residue protein sequence, read N- to C-terminus: Imidazole glycerol phosphate synthase subunit HisF (258 aa).

Active-site residues include aspartate 11 and aspartate 130.

It belongs to the HisA/HisF family. In terms of assembly, heterodimer of HisH and HisF.

The protein localises to the cytoplasm. The enzyme catalyses 5-[(5-phospho-1-deoxy-D-ribulos-1-ylimino)methylamino]-1-(5-phospho-beta-D-ribosyl)imidazole-4-carboxamide + L-glutamine = D-erythro-1-(imidazol-4-yl)glycerol 3-phosphate + 5-amino-1-(5-phospho-beta-D-ribosyl)imidazole-4-carboxamide + L-glutamate + H(+). Its pathway is amino-acid biosynthesis; L-histidine biosynthesis; L-histidine from 5-phospho-alpha-D-ribose 1-diphosphate: step 5/9. IGPS catalyzes the conversion of PRFAR and glutamine to IGP, AICAR and glutamate. The HisF subunit catalyzes the cyclization activity that produces IGP and AICAR from PRFAR using the ammonia provided by the HisH subunit. The chain is Imidazole glycerol phosphate synthase subunit HisF from Xanthomonas axonopodis pv. citri (strain 306).